We begin with the raw amino-acid sequence, 278 residues long: MTEAFARAKINLTLHVTGQRPDGYHLLDSLVVFADVGDRVRAEPAEALSLAITGPQAANLPVADDNLVLRAARTLGGQGARLTLEKHLPVASGIGGGSADAAAALVALARLWQVPLPDPAAVLKLGADVPVCLEGRAVRMAGVGEILTPLAAPLPEAWLVLANPGVSVPTPPVFKALARRDNPPMPDDLPGWPTVESLAALLATQRNDLEPPAIALAPEIARTRAALAAQPGCLLARMSGSGATCFGLFAAEEAARAAAEAIGTQHPGWWVAPARMVG.

Lys9 is an active-site residue. 89 to 99 (PVASGIGGGSA) serves as a coordination point for ATP. The active site involves Asp128.

This sequence belongs to the GHMP kinase family. IspE subfamily.

It carries out the reaction 4-CDP-2-C-methyl-D-erythritol + ATP = 4-CDP-2-C-methyl-D-erythritol 2-phosphate + ADP + H(+). It functions in the pathway isoprenoid biosynthesis; isopentenyl diphosphate biosynthesis via DXP pathway; isopentenyl diphosphate from 1-deoxy-D-xylulose 5-phosphate: step 3/6. Its function is as follows. Catalyzes the phosphorylation of the position 2 hydroxy group of 4-diphosphocytidyl-2C-methyl-D-erythritol. The chain is 4-diphosphocytidyl-2-C-methyl-D-erythritol kinase from Cereibacter sphaeroides (strain KD131 / KCTC 12085) (Rhodobacter sphaeroides).